The following is a 147-amino-acid chain: Secreted RxLR effector protein BLN04 (147 aa).

The signal sequence occupies residues 1-23; it reads MATMRRICFLFVFNLAVATSTQG. The dEER motif lies at 58 to 61; sequence SEER. Residues 117–137 form a helical membrane-spanning segment; it reads VYIYTILFLSIPIILGVAMYI.

The protein belongs to the RxLR effector family. Interacts with host transcription factor NAC069.

The protein localises to the secreted. The protein resides in the host membrane. In terms of biological role, secreted effector that inhibits stress-induced relocalization of the transcription factor NAC069 to the nucleus, thus affecting its broad role in abiotic and biotic stress responses. This chain is Secreted RxLR effector protein BLN04, found in Bremia lactucae (Lettuce downy mildew).